The chain runs to 614 residues: 1-deoxy-D-xylulose-5-phosphate synthase (614 aa).

Residues histidine 74 and 115–117 each bind thiamine diphosphate; that span reads AHS. Residue aspartate 146 participates in Mg(2+) binding. Residues 147–148, asparagine 175, tyrosine 282, and glutamate 363 each bind thiamine diphosphate; that span reads GA. Asparagine 175 is a binding site for Mg(2+).

This sequence belongs to the transketolase family. DXPS subfamily. Homodimer. Requires Mg(2+) as cofactor. It depends on thiamine diphosphate as a cofactor.

The enzyme catalyses D-glyceraldehyde 3-phosphate + pyruvate + H(+) = 1-deoxy-D-xylulose 5-phosphate + CO2. It functions in the pathway metabolic intermediate biosynthesis; 1-deoxy-D-xylulose 5-phosphate biosynthesis; 1-deoxy-D-xylulose 5-phosphate from D-glyceraldehyde 3-phosphate and pyruvate: step 1/1. In terms of biological role, catalyzes the acyloin condensation reaction between C atoms 2 and 3 of pyruvate and glyceraldehyde 3-phosphate to yield 1-deoxy-D-xylulose-5-phosphate (DXP). In Nitrosospira multiformis (strain ATCC 25196 / NCIMB 11849 / C 71), this protein is 1-deoxy-D-xylulose-5-phosphate synthase.